Here is a 312-residue protein sequence, read N- to C-terminus: Olfactory receptor 1D2 (312 aa).

Topologically, residues 1 to 25 (MDGGNQSEGSEFLLLGMSESPEQQR) are extracellular. The N-linked (GlcNAc...) asparagine glycan is linked to Asn-5. The helical transmembrane segment at 26 to 49 (ILFWMFLSMYLVTVVGNVLIILAI) threads the bilayer. Residues 50–57 (SSDSCLHT) are Cytoplasmic-facing. A helical transmembrane segment spans residues 58–79 (PMYFFLANLSFTDLFFVTNTIP). Residues 80 to 100 (KMLVNLQSQNKAISYAGCLTQ) are Extracellular-facing. Cys-97 and Cys-189 are joined by a disulfide. The chain crosses the membrane as a helical span at residues 101–120 (LYFLVSLVALDNLILAVMAY). Topologically, residues 121 to 139 (DRYVAICCPLHYTTAMSPK) are cytoplasmic. The helical transmembrane segment at 140 to 158 (LCILLLSLCWVLSVLYGLI) threads the bilayer. The Extracellular portion of the chain corresponds to 159-196 (HTLLMTRVTFCGSRKIHYIFCEMYVLLRMACSNIQTNH). Asn-195 is a glycosylation site (N-linked (GlcNAc...) asparagine). A helical membrane pass occupies residues 197 to 219 (TVLIATGCFIFLIPFGFVIISYV). At 220 to 236 (LIIRAILRIPSLSKKYK) the chain is on the cytoplasmic side. Residues 237-259 (AFSTCASHLGAVSLFYGTLCMVY) traverse the membrane as a helical segment. Over 260 to 271 (LKPLHTYSVKDS) the chain is Extracellular. The chain crosses the membrane as a helical span at residues 272–291 (VATVMYAVVTPMMNPFIYSL). The Cytoplasmic portion of the chain corresponds to 292–312 (RNKDMHGALGRLLDKHFKRLT).

This sequence belongs to the G-protein coupled receptor 1 family.

The protein resides in the cell membrane. Its function is as follows. Odorant receptor. This is Olfactory receptor 1D2 (OR1D2) from Pan troglodytes (Chimpanzee).